A 500-amino-acid polypeptide reads, in one-letter code: NAD(P)H-quinone oxidoreductase chain 4, chloroplastic (500 aa).

The next 12 helical transmembrane spans lie at 4-24 (FPWL…ILFI), 37-57 (ICIC…NFQL), 80-100 (LGID…TTLA), 134-154 (LLLF…LLSM), 167-187 (FILY…GMGL), 208-228 (GLEI…PPII), 242-262 (HYST…YGLV), 272-292 (AHSL…IYAA), 330-350 (GAIL…FLAG), 386-406 (LASP…GIIT), 416-436 (ILIT…LLSM), and 462-482 (IFIL…PDFV).

Belongs to the complex I subunit 4 family.

It localises to the plastid. The protein localises to the chloroplast thylakoid membrane. The enzyme catalyses a plastoquinone + NADH + (n+1) H(+)(in) = a plastoquinol + NAD(+) + n H(+)(out). It catalyses the reaction a plastoquinone + NADPH + (n+1) H(+)(in) = a plastoquinol + NADP(+) + n H(+)(out). In Amborella trichopoda, this protein is NAD(P)H-quinone oxidoreductase chain 4, chloroplastic.